Here is a 532-residue protein sequence, read N- to C-terminus: Berberine bridge enzyme-like 18 (532 aa).

The N-terminal stretch at 1-29 (MKFQSFFSSVLIFFTTSTLLLSIPHPVSA) is a signal peptide. N30, N33, N46, N59, N147, N169, and N262 each carry an N-linked (GlcNAc...) asparagine glycan. Residues C40 and C102 are joined by a disulfide bond. The FAD-binding PCMH-type domain occupies 80–254 (DVPKPVLILT…LSWKIGLINV (175 aa)). Positions 117–179 (HDYEGLSYVT…RTLAFPAGVC (63 aa)) form a cross-link, 6-(S-cysteinyl)-8alpha-(pros-histidyl)-FAD (His-Cys).

The protein belongs to the oxygen-dependent FAD-linked oxidoreductase family. FAD is required as a cofactor. In terms of processing, the FAD cofactor is bound via a bicovalent 6-S-cysteinyl, 8alpha-N1-histidyl FAD linkage.

It localises to the secreted. The protein resides in the cell wall. This Arabidopsis thaliana (Mouse-ear cress) protein is Berberine bridge enzyme-like 18.